The chain runs to 231 residues: Flagellar L-ring protein (231 aa).

The signal sequence occupies residues 1 to 18; the sequence is MNRLLSVFALGGAVLLAG. A lipid anchor (N-palmitoyl cysteine) is attached at C19. C19 carries S-diacylglycerol cysteine lipidation.

This sequence belongs to the FlgH family. As to quaternary structure, the basal body constitutes a major portion of the flagellar organelle and consists of four rings (L,P,S, and M) mounted on a central rod.

It localises to the cell outer membrane. The protein resides in the bacterial flagellum basal body. In terms of biological role, assembles around the rod to form the L-ring and probably protects the motor/basal body from shearing forces during rotation. The protein is Flagellar L-ring protein of Pseudomonas putida (strain ATCC 700007 / DSM 6899 / JCM 31910 / BCRC 17059 / LMG 24140 / F1).